We begin with the raw amino-acid sequence, 387 residues long: Glutamyl-tRNA reductase 1 (387 aa).

Substrate-binding positions include 45–48 (TCNR), Ser96, 101–103 (ETD), and Gln107. Catalysis depends on Cys46, which acts as the Nucleophile. 175 to 180 (GAGSVG) contacts NADP(+).

This sequence belongs to the glutamyl-tRNA reductase family. Homodimer.

The catalysed reaction is (S)-4-amino-5-oxopentanoate + tRNA(Glu) + NADP(+) = L-glutamyl-tRNA(Glu) + NADPH + H(+). The protein operates within porphyrin-containing compound metabolism; protoporphyrin-IX biosynthesis; 5-aminolevulinate from L-glutamyl-tRNA(Glu): step 1/2. Its function is as follows. Catalyzes the NADPH-dependent reduction of glutamyl-tRNA(Glu) to glutamate 1-semialdehyde (GSA). This chain is Glutamyl-tRNA reductase 1, found in Pyrobaculum arsenaticum (strain DSM 13514 / JCM 11321 / PZ6).